A 118-amino-acid polypeptide reads, in one-letter code: Basic phospholipase A2 homolog 1 (118 aa).

7 disulfide bridges follow: cysteine 11-cysteine 71, cysteine 27-cysteine 117, cysteine 29-cysteine 45, cysteine 44-cysteine 98, cysteine 51-cysteine 91, cysteine 60-cysteine 84, and cysteine 78-cysteine 89. The important for membrane-damaging activities in eukaryotes and bacteria; heparin-binding stretch occupies residues 106–118 (NKNFNIDTKKRCK).

This sequence belongs to the phospholipase A2 family. Group I subfamily. D49 sub-subfamily. As to expression, expressed by the venom gland.

The protein resides in the secreted. In Laticauda colubrina (Yellow-lipped sea krait), this protein is Basic phospholipase A2 homolog 1.